The sequence spans 385 residues: UPF0284 protein P9215_05181 (385 aa).

This sequence belongs to the UPF0284 family.

This is UPF0284 protein P9215_05181 from Prochlorococcus marinus (strain MIT 9215).